A 188-amino-acid polypeptide reads, in one-letter code: Large ribosomal subunit protein uL5 (188 aa).

Belongs to the universal ribosomal protein uL5 family. In terms of assembly, part of the 50S ribosomal subunit; part of the 5S rRNA/L5/L18/L25 subcomplex. Contacts the 5S rRNA and the P site tRNA. Forms a bridge to the 30S subunit in the 70S ribosome.

Functionally, this is one of the proteins that bind and probably mediate the attachment of the 5S RNA into the large ribosomal subunit, where it forms part of the central protuberance. In the 70S ribosome it contacts protein S13 of the 30S subunit (bridge B1b), connecting the 2 subunits; this bridge is implicated in subunit movement. Contacts the P site tRNA; the 5S rRNA and some of its associated proteins might help stabilize positioning of ribosome-bound tRNAs. The protein is Large ribosomal subunit protein uL5 of Aquifex aeolicus (strain VF5).